We begin with the raw amino-acid sequence, 427 residues long: Peptidase B (427 aa).

Mn(2+)-binding residues include lysine 195 and aspartate 200. The active site involves lysine 207. Aspartate 218, aspartate 277, and glutamate 279 together coordinate Mn(2+). Arginine 281 is a catalytic residue.

Belongs to the peptidase M17 family. As to quaternary structure, homohexamer. Mn(2+) is required as a cofactor.

The protein resides in the cytoplasm. It carries out the reaction Release of an N-terminal amino acid, Xaa, from a peptide or arylamide. Xaa is preferably Glu or Asp but may be other amino acids, including Leu, Met, His, Cys and Gln.. Its function is as follows. Probably plays an important role in intracellular peptide degradation. In Shigella dysenteriae serotype 1 (strain Sd197), this protein is Peptidase B.